A 933-amino-acid polypeptide reads, in one-letter code: C-1-tetrahydrofolate synthase, cytoplasmic (933 aa).

Residues 1–303 are methylenetetrahydrofolate dehydrogenase and cyclohydrolase; it reads MWEPQGSLDP…DRLLAPTWPL (303 aa). Substrate contacts are provided by residues 51–55 and 98–100; these read YIRMK and VQM. NADP(+) contacts are provided by residues 170 to 172 and serine 195; that span reads GRS. Residue 270–274 coordinates substrate; it reads PGGVG. Residues 304–933 are formyltetrahydrofolate synthetase; sequence RPLRITPLSP…TKTGEIEGLF (630 aa). 378 to 385 contributes to the ATP binding site; sequence TPLGEGKS.

This sequence in the N-terminal section; belongs to the tetrahydrofolate dehydrogenase/cyclohydrolase family. In the C-terminal section; belongs to the formate--tetrahydrofolate ligase family. As to quaternary structure, homodimer.

Its subcellular location is the cytoplasm. The enzyme catalyses (6R)-5,10-methylene-5,6,7,8-tetrahydrofolate + NADP(+) = (6R)-5,10-methenyltetrahydrofolate + NADPH. It catalyses the reaction (6R)-5,10-methenyltetrahydrofolate + H2O = (6R)-10-formyltetrahydrofolate + H(+). It carries out the reaction (6S)-5,6,7,8-tetrahydrofolate + formate + ATP = (6R)-10-formyltetrahydrofolate + ADP + phosphate. It participates in one-carbon metabolism; tetrahydrofolate interconversion. The chain is C-1-tetrahydrofolate synthase, cytoplasmic from Spodoptera frugiperda (Fall armyworm).